A 359-amino-acid polypeptide reads, in one-letter code: S-adenosylmethionine:tRNA ribosyltransferase-isomerase (359 aa).

The protein belongs to the QueA family. As to quaternary structure, monomer.

The protein localises to the cytoplasm. The catalysed reaction is 7-aminomethyl-7-carbaguanosine(34) in tRNA + S-adenosyl-L-methionine = epoxyqueuosine(34) in tRNA + adenine + L-methionine + 2 H(+). Its pathway is tRNA modification; tRNA-queuosine biosynthesis. Transfers and isomerizes the ribose moiety from AdoMet to the 7-aminomethyl group of 7-deazaguanine (preQ1-tRNA) to give epoxyqueuosine (oQ-tRNA). This chain is S-adenosylmethionine:tRNA ribosyltransferase-isomerase, found in Alcanivorax borkumensis (strain ATCC 700651 / DSM 11573 / NCIMB 13689 / SK2).